A 141-amino-acid chain; its full sequence is Nucleoside diphosphate kinase (141 aa).

6 residues coordinate ATP: lysine 11, phenylalanine 59, arginine 87, threonine 93, arginine 104, and asparagine 114. Histidine 117 (pros-phosphohistidine intermediate) is an active-site residue.

It belongs to the NDK family. In terms of assembly, homotetramer. Requires Mg(2+) as cofactor.

Its subcellular location is the cytoplasm. The enzyme catalyses a 2'-deoxyribonucleoside 5'-diphosphate + ATP = a 2'-deoxyribonucleoside 5'-triphosphate + ADP. It carries out the reaction a ribonucleoside 5'-diphosphate + ATP = a ribonucleoside 5'-triphosphate + ADP. Functionally, major role in the synthesis of nucleoside triphosphates other than ATP. The ATP gamma phosphate is transferred to the NDP beta phosphate via a ping-pong mechanism, using a phosphorylated active-site intermediate. The polypeptide is Nucleoside diphosphate kinase (Polaromonas naphthalenivorans (strain CJ2)).